A 325-amino-acid chain; its full sequence is Methionyl-tRNA formyltransferase (325 aa).

Residue 112–115 (SLLP) participates in (6S)-5,6,7,8-tetrahydrofolate binding.

It belongs to the Fmt family.

The enzyme catalyses L-methionyl-tRNA(fMet) + (6R)-10-formyltetrahydrofolate = N-formyl-L-methionyl-tRNA(fMet) + (6S)-5,6,7,8-tetrahydrofolate + H(+). Its function is as follows. Attaches a formyl group to the free amino group of methionyl-tRNA(fMet). The formyl group appears to play a dual role in the initiator identity of N-formylmethionyl-tRNA by promoting its recognition by IF2 and preventing the misappropriation of this tRNA by the elongation apparatus. This Roseiflexus sp. (strain RS-1) protein is Methionyl-tRNA formyltransferase.